Reading from the N-terminus, the 304-residue chain is Glycine--tRNA ligase alpha subunit (304 aa).

Belongs to the class-II aminoacyl-tRNA synthetase family. As to quaternary structure, tetramer of two alpha and two beta subunits.

The protein localises to the cytoplasm. The enzyme catalyses tRNA(Gly) + glycine + ATP = glycyl-tRNA(Gly) + AMP + diphosphate. The protein is Glycine--tRNA ligase alpha subunit of Pectobacterium carotovorum subsp. carotovorum (strain PC1).